The sequence spans 154 residues: Large ribosomal subunit protein uL13 (154 aa).

It belongs to the universal ribosomal protein uL13 family. In terms of assembly, part of the 50S ribosomal subunit.

In terms of biological role, this protein is one of the early assembly proteins of the 50S ribosomal subunit, although it is not seen to bind rRNA by itself. It is important during the early stages of 50S assembly. The sequence is that of Large ribosomal subunit protein uL13 from Rhodopseudomonas palustris (strain BisB18).